Consider the following 396-residue polypeptide: 12-oxophytodienoate reductase 3 (396 aa).

FMN is bound by residues 31–33, Gly64, and Gln106; that span reads PMT. Residue 185–188 participates in substrate binding; sequence HGAH. The active-site Proton donor is Tyr190. Arg237 contacts FMN. Arg283 lines the substrate pocket. FMN-binding positions include Gly321 and 342-343; that span reads GR. The tract at residues 342–343 is FMN; sequence GR. Residues 394–396 carry the Microbody targeting signal motif; sequence SRL.

It belongs to the NADH:flavin oxidoreductase/NADH oxidase family. The cofactor is FMN. Expressed in roots and to a lower extent in leaves and flowers.

The protein resides in the peroxisome. It carries out the reaction (1S,2S)-OPC-8 + NADP(+) = (9S,13S,15Z)-12-oxophyto-10,15-dienoate + NADPH + H(+). It participates in lipid metabolism; oxylipin biosynthesis. Specifically cleaves olefinic bonds in cyclic enones. Involved in the biosynthesis of jasmonic acid (JA) and perhaps in biosynthesis or metabolism of other oxylipin signaling moleclules. It is required for the spatial and temporal regulation of JA levels during dehiscence of anthers, promoting the stomium degeneration program. In vitro, reduces 9S,13S-12-oxophytodienoic acid (9S,13S-OPDA) and 9R,13R-OPDA to 9S,13S-OPC-8:0 and 9R,13R-OPC-8:0, respectively. The sequence is that of 12-oxophytodienoate reductase 3 (OPR3) from Solanum lycopersicum (Tomato).